A 284-amino-acid polypeptide reads, in one-letter code: Four and a half LIM domains protein 5 (284 aa).

The C4-type zinc-finger motif lies at 8-32 (CQYCTASLLGKKYVLKDDSPYCVTC). LIM zinc-binding domains follow at residues 39–100 (NYCE…ECSS), 101–160 (KCFH…KEFA), 161–220 (HYCN…LYAN), and 223–283 (VACS…MDTD).

In terms of assembly, interacts with CREM (via the third LIM domain). Interacts (via second LIM domain) with SPAG8. In terms of tissue distribution, testis-specific (at protein level).

It localises to the nucleus. In terms of biological role, may be involved in the regulation of spermatogenesis. Stimulates CREM transcriptional activity in a phosphorylation-independent manner. This Homo sapiens (Human) protein is Four and a half LIM domains protein 5 (FHL5).